Here is a 288-residue protein sequence, read N- to C-terminus: GTP-binding protein 8 (288 aa).

The EngB-type G domain maps to His109–Asn282. GTP contacts are provided by residues Gly117–Ser124, Gly146–Lys150, Asp164–Gly167, Thr226–Asp229, and Val261–Ala263. Residues Ser124 and Thr148 each coordinate Mg(2+).

This sequence belongs to the TRAFAC class TrmE-Era-EngA-EngB-Septin-like GTPase superfamily. EngB GTPase family. Mg(2+) is required as a cofactor.

In Bos taurus (Bovine), this protein is GTP-binding protein 8 (GTPBP8).